Consider the following 145-residue polypeptide: Thioredoxin C-3 (145 aa).

Residues Cys25, Cys28, and His29 each coordinate heme. The Thioredoxin domain occupies 29-140 (HQALLPLEPI…LQQWLDQQLQ (112 aa)). Cysteines 65 and 68 form a disulfide.

This sequence belongs to the thioredoxin family.

Participates in various redox reactions through the reversible oxidation of its active center dithiol to a disulfide and catalyzes dithiol-disulfide exchange reactions. The protein is Thioredoxin C-3 of Corynebacterium nephridii.